The sequence spans 253 residues: NAD-dependent protein deacetylase (253 aa).

Positions Ala-3–Asn-253 constitute a Deacetylase sirtuin-type domain. NAD(+)-binding residues include Ala-29, Thr-33, Phe-40, Arg-41, Gln-106, Ile-108, Asp-109, and His-126. Nicotinamide is bound at residue Phe-40. The nicotinamide site is built by Ile-108 and Asp-109. The active-site Proton acceptor is the His-126. Cys-134, Cys-137, Cys-159, and Cys-162 together coordinate Zn(2+). NAD(+)-binding residues include Ser-200, Ser-201, Asn-225, Asp-242, and Ile-243.

It belongs to the sirtuin family. Class U subfamily. Requires Zn(2+) as cofactor.

The protein resides in the cytoplasm. It carries out the reaction N(6)-acetyl-L-lysyl-[protein] + NAD(+) + H2O = 2''-O-acetyl-ADP-D-ribose + nicotinamide + L-lysyl-[protein]. Functionally, NAD-dependent protein deacetylase which modulates the activities of several enzymes which are inactive in their acetylated form. The protein is NAD-dependent protein deacetylase of Rhodopseudomonas palustris (strain ATCC BAA-98 / CGA009).